The primary structure comprises 310 residues: DNA repair nuclease APEX1 (310 aa).

Positions 1-51 are disordered; that stretch reads MPKRAKKNEEGVDGEADNGTAAAKKEKKGKEPEAPILYEDPPEKLTSKDGR. The segment covering 41–51 has biased composition (basic and acidic residues); that stretch reads PPEKLTSKDGR. Mg(2+) is bound by residues Asp-63 and Glu-89. Tyr-164 is a catalytic residue. Residues Asp-203, Asn-205, and Asp-300 each coordinate Mg(2+). Asp-203 acts as the Proton donor/acceptor in catalysis.

It belongs to the DNA repair enzymes AP/ExoA family. It depends on Mg(2+) as a cofactor. Requires Mn(2+) as cofactor.

Its subcellular location is the nucleus. It is found in the nucleolus. The protein resides in the nucleus speckle. It localises to the endoplasmic reticulum. The protein localises to the cytoplasm. Its subcellular location is the mitochondrion. The catalysed reaction is Exonucleolytic cleavage in the 3'- to 5'-direction to yield nucleoside 5'-phosphates.. Functions as an apurinic/apyrimidinic (AP) endodeoxyribonuclease in the DNA base excision repair (BER) pathway of DNA lesions induced by oxidative and alkylating agents. Initiates repair of AP sites in DNA by catalyzing hydrolytic incision of the phosphodiester backbone immediately adjacent to the damage, generating a single-strand break with 5'-deoxyribose phosphate and 3'-hydroxyl ends. Has 3'-5' exoribonuclease activity on mismatched deoxyribonucleotides at the 3' termini of nicked or gapped DNA molecules during short-patch BER. May also play a role in the epigenetic regulation of gene expression by participating in DNA demethylation. Required for passage through the mid-blastula transition MBT. May also act as an endoribonuclease involved in the control of single-stranded RNA metabolism. Has no redox activity. Binds DNA and RNA. This is DNA repair nuclease APEX1 (apex1) from Danio rerio (Zebrafish).